The primary structure comprises 115 residues: uncharacterized protein (115 aa).

The CHCH domain occupies 63–108 (GSPCGFEFREAITCQKTNSDGEIEQGACGKELMSFMECVTRTQCFG). 2 consecutive short sequence motifs (cx9C motif) follow at residues 66-76 (CGFEFREAITC) and 90-100 (CGKELMSFMEC). Disulfide bonds link C66–C100 and C76–C90.

This is an uncharacterized protein from Caenorhabditis elegans.